A 190-amino-acid chain; its full sequence is MNLILFGPPAAGKGTQAKRLVEQRRMVQLSTGDMLRAAIASGSELGQRVSGIMERGELVSDAIVIELIEQRLPEAEAAGGAIFDGFPRTLAQAEALDAMLAGRGRRIDLVVRLKVDDAALMQRIAGRFAESGRADDNPESFKVRLDAYNRQTAPLLPYYEGQGKLVEVDGMGSIDQVAAAIDAALTGAAA.

Position 10-15 (10-15 (AAGKGT)) interacts with ATP. Residues 30 to 59 (STGDMLRAAIASGSELGQRVSGIMERGELV) are NMP. Residues Thr-31, Arg-36, 57 to 59 (ELV), 85 to 88 (GFPR), and Gln-92 each bind AMP. Residues 126 to 136 (GRFAESGRADD) are LID. Residue Arg-127 participates in ATP binding. 2 residues coordinate AMP: Arg-133 and Arg-144. Gly-172 contributes to the ATP binding site.

This sequence belongs to the adenylate kinase family. As to quaternary structure, monomer.

It is found in the cytoplasm. It carries out the reaction AMP + ATP = 2 ADP. Its pathway is purine metabolism; AMP biosynthesis via salvage pathway; AMP from ADP: step 1/1. Functionally, catalyzes the reversible transfer of the terminal phosphate group between ATP and AMP. Plays an important role in cellular energy homeostasis and in adenine nucleotide metabolism. The protein is Adenylate kinase of Phenylobacterium zucineum (strain HLK1).